Reading from the N-terminus, the 494-residue chain is Cytochrome P450 monooxygenase ccsD (494 aa).

The helical transmembrane segment at 5 to 25 (ISPRTLVLLAVTCSLLVLYFS) threads the bilayer. Cysteine 438 is a heme binding site. Residues asparagine 445 and asparagine 477 are each glycosylated (N-linked (GlcNAc...) asparagine).

It belongs to the cytochrome P450 family. The cofactor is heme.

It localises to the membrane. It functions in the pathway mycotoxin biosynthesis. Cytochrome P450 monooxygenase; part of the gene cluster that mediates the biosynthesis of a family of the mycotoxins cytochalasins E and K. The hybrid PKS-NRPS synthetase ccsA and the enoyl reductase ccsC are responsible for fusion of phenylalanine with an octaketide backbone and subsequent release of the stable tetramic acid precursor. The polyketide synthase module (PKS) of the PKS-NRPS ccsA is responsible for the synthesis of the octaketide backbone. The downstream nonribosomal peptide synthetase (NRPS) amidates the carboxyl end of the octaketide with a phenylalanine. A reductase-like domain (R) at the C-terminus catalyzes the reductive release of the polyketide-amino acid intermediate. Because ccsA lacks a designated enoylreductase (ER) domain, the required activity is provided the enoyl reductase ccsC. Upon formation of the 11-membered carbocycle-fused perhydroisoindolone intermediate, a number of oxidative steps are required to afford the final cytochalasin E and K, including two hydroxylations at C17 and C18, one alcohol oxidation at C17, one epoxidation at C6 and C7 and two Baeyer-Villiger oxidations. The oxidative modification at C17, C18 and the C6-C7 epoxidation are likely to be catalyzed by the two cytochrome P450 oxygenases ccsD and ccsG. CcsD may be responsible for the epoxidation of the C6-C7 double bond. CcsG may be responsible for the successive oxidative modifications at C17 and C18. The double Baeyer-Villiger oxidations of ketocytochalasin to precytochalasin and cytochalasin Z(16) are among the final steps leading to cytochalasin E and K and are catalyzed by ccsB. The first oxygen insertion step follows that of the classic BVMO mechanism, generating the ester precytochalasin. Release of precytochalasin into an aqueous environment can generate the shunt product iso-precytochalasin through spontaneous isomerization. Alternatively, precytochalasin can undergo further oxidation by ccsB to yield the in-line carbonate-containing cytochalasin Z(16). Cytochalasin Z(16) is a precursor to cytochalasin E and cytochalasin K, whereas iso-precytochalasin is a precursor to cytochalasin Z(17) and rosellichalasin. The hydrolyase ccsE may catalyze hydrolysis of epoxide bond in cytochalasin E to afford cytochalasin K. The function of ccsF has not been assigned but it may play a role in post-PKS-NRPS biosynthetic step, resistance or transport of cytochalasins and related PKS-NRPS products. In Aspergillus clavatus (strain ATCC 1007 / CBS 513.65 / DSM 816 / NCTC 3887 / NRRL 1 / QM 1276 / 107), this protein is Cytochrome P450 monooxygenase ccsD.